A 648-amino-acid polypeptide reads, in one-letter code: Spastin (648 aa).

The Cytoplasmic portion of the chain corresponds to 1-40 (MASTVALLRDSSDDRENFDDGETDCVQVGRKRKLTVFFYP). An intramembrane region (helical) is located at residues 41–61 (LLLVFWLLRWVFYQFFLVLCF). Over 62 to 648 (VCRGFVPRRH…WNREFGDITV (587 aa)) the chain is Cytoplasmic. In terms of domain architecture, MIT spans 99–174 (HKKAFDFISK…EMARDRLDFL (76 aa)). Positions 188–346 (PWHGGVAPAQ…SQRSLLSSRV (159 aa)) are disordered. Residues 247-266 (TGVTLRRQQQQQLGGVSTVS) are compositionally biased toward low complexity. Residue 414-421 (GPPGNGKT) participates in ATP binding.

It belongs to the AAA ATPase family. Spastin subfamily. As to quaternary structure, homohexamer. The homohexamer is stabilized by ATP-binding. The homohexamer may adopt a ring conformation through which microtubules pass prior to being severed. Interacts with microtubules.

Its subcellular location is the membrane. It localises to the cytoplasm. The protein localises to the cytoskeleton. It is found in the microtubule organizing center. The protein resides in the centrosome. The catalysed reaction is n ATP + n H2O + a microtubule = n ADP + n phosphate + (n+1) alpha/beta tubulin heterodimers.. Its function is as follows. ATP-dependent microtubule severing protein. Microtubule severing may promote reorganization of cellular microtubule arrays and the release of microtubules from the microtubule organizing center following nucleation. The sequence is that of Spastin (spas) from Ixodes scapularis (Black-legged tick).